A 447-amino-acid polypeptide reads, in one-letter code: Phosphoglucosamine mutase (447 aa).

The Phosphoserine intermediate role is filled by Ser-102. Mg(2+)-binding residues include Ser-102, Asp-241, Asp-243, and Asp-245. A Phosphoserine modification is found at Ser-102.

The protein belongs to the phosphohexose mutase family. It depends on Mg(2+) as a cofactor. In terms of processing, activated by phosphorylation.

The catalysed reaction is alpha-D-glucosamine 1-phosphate = D-glucosamine 6-phosphate. Catalyzes the conversion of glucosamine-6-phosphate to glucosamine-1-phosphate. The sequence is that of Phosphoglucosamine mutase from Delftia acidovorans (strain DSM 14801 / SPH-1).